Here is a 373-residue protein sequence, read N- to C-terminus: MFLNGQGGQRPPMVAFPPLNVRGSISSGFNALGRSRNNSDAMDIYTITDRGPAAERDPAAGRWHANGSPSINSTSSKNPDRYPCYQENGRTYHGYRKGIYMLPCDEQEQDRLDIFHKLFTVARVSDGLIYAPHPTNGRFLDLGCGTGIWAIDVANKYPEAFVVGVDLAPIQPPNHPRNCDFYAPFDFESLWALGEDSWDLIHMQMGSGSVASWPNLYRRIYSHLRPGAWFEQVEIDFEPRCDDRSLEGLAIRQWYQLLKQATEETMRPVAHNSRETIRNLQEAGFTEIDHQMVGLPLNPWHEDEHERRVARWYNLAISESIETMSLAPFSRVFGWPIERIKQIAADVKSEAFNKEIHTYNILHIYQARKPLAN.

Residues 55 to 81 (ERDPAAGRWHANGSPSINSTSSKNPDR) form a disordered region. Residues 67-77 (GSPSINSTSSK) are compositionally biased toward polar residues.

It belongs to the methyltransferase superfamily. LaeA methyltransferase family. As to quaternary structure, component of the heterotrimeric velvet complex composed of laeA, veA and velB; VeA acting as a bridging protein between laeA and velB.

It is found in the nucleus. The catalysed reaction is L-methionyl-[protein] + S-adenosyl-L-methionine = S-methyl-L-methionyl-[protein] + S-adenosyl-L-homocysteine. In terms of biological role, methyltransferase that performs automethylation. No other methyl-accepting substrate has been identified yet. Component of the velvet transcription factor complex that acts as a global regulator for secondary metabolite gene expression. Positively controls expression of 20% to 40% of major classes of secondary metabolite biosynthesis genes such as nonribosomal peptide synthetases, polyketide synthases, and P450 monooxygenases. Controls the expression of the gliotoxin gene cluster. Controls the expression of the fumitremorgin, fumagillin, and pseurotin gene clusters, where genes for fumagillin and pseurotin are physically intertwined in a single supercluster. Regulates the biosynthetic genes required for endocrocin production. Secondary metabolites under the transcriptional regulation of laeA are necessary for inhibition of angiogenesis during invasive infection in mice. Controls the expression of cell surface rodA, a hydrophobin that acts as an antiphagocytic molecule. Also regulates the expression of genes involved in conidial biosynthesis. The polypeptide is Secondary metabolism regulator laeA (Aspergillus fumigatus (strain ATCC MYA-4609 / CBS 101355 / FGSC A1100 / Af293) (Neosartorya fumigata)).